The primary structure comprises 319 residues: Acetyl-coenzyme A carboxylase carboxyl transferase subunit alpha (319 aa).

Residues 39 to 293 (RLQKKSNDLT…KAVLEKQLHE (255 aa)) form the CoA carboxyltransferase C-terminal domain.

The protein belongs to the AccA family. Acetyl-CoA carboxylase is a heterohexamer composed of biotin carboxyl carrier protein (AccB), biotin carboxylase (AccC) and two subunits each of ACCase subunit alpha (AccA) and ACCase subunit beta (AccD).

It is found in the cytoplasm. It carries out the reaction N(6)-carboxybiotinyl-L-lysyl-[protein] + acetyl-CoA = N(6)-biotinyl-L-lysyl-[protein] + malonyl-CoA. It participates in lipid metabolism; malonyl-CoA biosynthesis; malonyl-CoA from acetyl-CoA: step 1/1. Component of the acetyl coenzyme A carboxylase (ACC) complex. First, biotin carboxylase catalyzes the carboxylation of biotin on its carrier protein (BCCP) and then the CO(2) group is transferred by the carboxyltransferase to acetyl-CoA to form malonyl-CoA. The chain is Acetyl-coenzyme A carboxylase carboxyl transferase subunit alpha from Neisseria meningitidis serogroup C / serotype 2a (strain ATCC 700532 / DSM 15464 / FAM18).